The chain runs to 481 residues: Xylulose kinase (481 aa).

Substrate is bound at residue 81–82 (QH). Asp-239 serves as the catalytic Proton acceptor.

It belongs to the FGGY kinase family.

It carries out the reaction D-xylulose + ATP = D-xylulose 5-phosphate + ADP + H(+). Catalyzes the phosphorylation of D-xylulose to D-xylulose 5-phosphate. This chain is Xylulose kinase, found in Streptomyces rubiginosus.